The chain runs to 502 residues: Lysine--tRNA ligase (502 aa).

Mg(2+)-binding residues include Glu398 and Glu405.

It belongs to the class-II aminoacyl-tRNA synthetase family. In terms of assembly, homodimer. Mg(2+) is required as a cofactor.

The protein localises to the cytoplasm. The enzyme catalyses tRNA(Lys) + L-lysine + ATP = L-lysyl-tRNA(Lys) + AMP + diphosphate. The protein is Lysine--tRNA ligase of Thermotoga sp. (strain RQ2).